Reading from the N-terminus, the 694-residue chain is Follicle-stimulating hormone receptor (694 aa).

A signal peptide spans 1-17; sequence MALLLVSLLAFLGSGAG. Intrachain disulfides connect C18–C25 and C23–C32. Residues 18–46 form the LRRNT domain; that stretch reads CHHWLCHCSDRVFLCQDSKVTEIPPDLPR. Topologically, residues 18-365 are extracellular; it reads CHHWLCHCSD…EDIMGYNILR (348 aa). LRR repeat units follow at residues 49–72, 73–97, 98–118, 119–143, 144–169, 170–192, 193–216, 217–240, and 241–259; these read IELR…FKDL, EKIE…LPKL, HEIR…AFQN, LPNL…KIQS, LQKV…MGLS, FDSL…AFNG, TQLD…VFRG, ASGP…GLEN, and LKKL…PSLD. Residues N191 and N199 are each glycosylated (N-linked (GlcNAc...) asparagine). Cystine bridges form between C275/C345, C276/C292, C276/C355, and C292/C337. 2 N-linked (GlcNAc...) asparagine glycosylation sites follow: N293 and N311. A helical membrane pass occupies residues 366-386; sequence VLIWFISILAITGNITVLVIL. The Cytoplasmic segment spans residues 387–397; sequence TTSQYKLTVPR. Residues 398 to 420 traverse the membrane as a helical segment; that stretch reads FLMCNLAFADLCIGIYLLPIASV. Residues 421–442 lie on the Extracellular side of the membrane; it reads DIHTKSQYHNYAIDWQTAVGCD. A disulfide bond links C441 and C516. The chain crosses the membrane as a helical span at residues 443–464; it reads AAGFFTAFASELSVYTLTAIPL. At 465-484 the chain is on the cytoplasmic side; sequence ERWHTITHAMQLERKVQLRH. The helical transmembrane segment at 485–507 threads the bilayer; it reads AASVMVMGWVFAFAAALLPIFGV. At 508-527 the chain is on the extracellular side; that stretch reads SSYMKVSICLPIDIDSPLSQ. The helical transmembrane segment at 528 to 549 threads the bilayer; that stretch reads LYVMALLVLNVLAFVVICGCYT. At 550 to 572 the chain is on the cytoplasmic side; sequence HIYLTVRNPNIVSSSSDTKIAKR. The helical transmembrane segment at 573–596 threads the bilayer; that stretch reads MATLIFTDFLCMAPISLFAISASL. The Extracellular segment spans residues 597–607; the sequence is KAPLITVSKAK. A helical transmembrane segment spans residues 608–629; that stretch reads ILLVLFYPINSCANPFLYAIFT. At 630-694 the chain is on the cytoplasmic side; sequence KNFRRDFFIL…LVPLSQSAHN (65 aa).

The protein belongs to the G-protein coupled receptor 1 family. FSH/LSH/TSH subfamily. Homotrimer. Functions as a homotrimer binding the FSH hormone heterodimer composed of CGA and FSHB. Interacts with ARRB2. Interacts with APPL2; interaction is independent of follicle stimulating hormone stimulation. N-glycosylated; indirectly required for FSH-binding, possibly via a conformational change that allows high affinity binding of hormone.

Its subcellular location is the cell membrane. Functionally, g protein-coupled receptor for follitropin, the follicle-stimulating hormone. Through cAMP production activates the downstream PI3K-AKT and ERK1/ERK2 signaling pathways. This is Follicle-stimulating hormone receptor (FSHR) from Mesocricetus auratus (Golden hamster).